The primary structure comprises 855 residues: Axonemal dynein light chain domain-containing protein 1 (855 aa).

The span at 1 to 17 (MSLPKTPSTPLNSASTS) shows a compositional bias: polar residues. The interval 1–31 (MSLPKTPSTPLNSASTSESKKLVSVATEGTR) is disordered. Coiled coils occupy residues 316–402 (QRIL…WSSA), 451–480 (LQKLTQKWRNLVNKFKQEVEEMEESTRETL), and 571–596 (SERQYMEEIIKNIQKLYKEYEIRING).

Its subcellular location is the cytoplasm. Functionally, may be essential for spermiogenesis and male fertility probably by regulating the manchette dynamics, spermatid head shaping and sperm flagellum assembly. The sequence is that of Axonemal dynein light chain domain-containing protein 1 (AXDND1) from Macaca fascicularis (Crab-eating macaque).